We begin with the raw amino-acid sequence, 177 residues long: Inorganic pyrophosphatase (177 aa).

Substrate-binding residues include Lys-30, Arg-44, and Tyr-56. Asp-66, Asp-71, and Asp-103 together coordinate Mg(2+). Tyr-142 lines the substrate pocket.

The protein belongs to the PPase family. In terms of assembly, homohexamer. Mg(2+) is required as a cofactor.

Its subcellular location is the cytoplasm. It carries out the reaction diphosphate + H2O = 2 phosphate + H(+). Functionally, catalyzes the hydrolysis of inorganic pyrophosphate (PPi) forming two phosphate ions. In Mesorhizobium japonicum (strain LMG 29417 / CECT 9101 / MAFF 303099) (Mesorhizobium loti (strain MAFF 303099)), this protein is Inorganic pyrophosphatase.